The following is a 236-amino-acid chain: Phosphoribosylaminoimidazole-succinocarboxamide synthase (236 aa).

It belongs to the SAICAR synthetase family.

It catalyses the reaction 5-amino-1-(5-phospho-D-ribosyl)imidazole-4-carboxylate + L-aspartate + ATP = (2S)-2-[5-amino-1-(5-phospho-beta-D-ribosyl)imidazole-4-carboxamido]succinate + ADP + phosphate + 2 H(+). It participates in purine metabolism; IMP biosynthesis via de novo pathway; 5-amino-1-(5-phospho-D-ribosyl)imidazole-4-carboxamide from 5-amino-1-(5-phospho-D-ribosyl)imidazole-4-carboxylate: step 1/2. The sequence is that of Phosphoribosylaminoimidazole-succinocarboxamide synthase from Streptococcus equi subsp. zooepidemicus (strain H70).